An 80-amino-acid polypeptide reads, in one-letter code: Putative membrane protein insertion efficiency factor (80 aa).

Residues 61 to 80 are disordered; it reads KTGKDPVPDHFSLKRNQEGE. Basic and acidic residues predominate over residues 62–80; sequence TGKDPVPDHFSLKRNQEGE.

The protein belongs to the UPF0161 family.

It localises to the cell membrane. Its function is as follows. Could be involved in insertion of integral membrane proteins into the membrane. This Streptococcus pneumoniae serotype 2 (strain D39 / NCTC 7466) protein is Putative membrane protein insertion efficiency factor.